Reading from the N-terminus, the 173-residue chain is Alkyl hydroperoxide reductase AhpD (173 aa).

Catalysis depends on Cys131, which acts as the Proton donor. Residues Cys131 and Cys134 are joined by a disulfide bond. Catalysis depends on Cys134, which acts as the Cysteine sulfenic acid (-SOH) intermediate.

The protein belongs to the AhpD family.

The catalysed reaction is N(6)-[(R)-dihydrolipoyl]-L-lysyl-[lipoyl-carrier protein] + a hydroperoxide = N(6)-[(R)-lipoyl]-L-lysyl-[lipoyl-carrier protein] + an alcohol + H2O. Functionally, antioxidant protein with alkyl hydroperoxidase activity. Required for the reduction of the AhpC active site cysteine residues and for the regeneration of the AhpC enzyme activity. This Maricaulis maris (strain MCS10) (Caulobacter maris) protein is Alkyl hydroperoxide reductase AhpD.